The sequence spans 232 residues: Ribosomal RNA small subunit methyltransferase G (232 aa).

Residues Gly93, Leu98, 144–145 (VE), and Arg163 contribute to the S-adenosyl-L-methionine site.

Belongs to the methyltransferase superfamily. RNA methyltransferase RsmG family.

The protein localises to the cytoplasm. It carries out the reaction guanosine(527) in 16S rRNA + S-adenosyl-L-methionine = N(7)-methylguanosine(527) in 16S rRNA + S-adenosyl-L-homocysteine. Specifically methylates the N7 position of guanine in position 527 of 16S rRNA. The sequence is that of Ribosomal RNA small subunit methyltransferase G from Burkholderia pseudomallei (strain 668).